We begin with the raw amino-acid sequence, 466 residues long: UDP-N-acetylmuramate--L-alanine ligase (466 aa).

119-125 (GTHGKTT) is an ATP binding site.

The protein belongs to the MurCDEF family.

It is found in the cytoplasm. It catalyses the reaction UDP-N-acetyl-alpha-D-muramate + L-alanine + ATP = UDP-N-acetyl-alpha-D-muramoyl-L-alanine + ADP + phosphate + H(+). It functions in the pathway cell wall biogenesis; peptidoglycan biosynthesis. In terms of biological role, cell wall formation. The sequence is that of UDP-N-acetylmuramate--L-alanine ligase from Cytophaga hutchinsonii (strain ATCC 33406 / DSM 1761 / CIP 103989 / NBRC 15051 / NCIMB 9469 / D465).